The following is a 261-amino-acid chain: Methyl jasmonate esterase 1 (261 aa).

An AB hydrolase-1 domain is found at 8 to 251; it reads FVLVHGACHG…MFSKPLDLCA (244 aa). S82 acts as the Acyl-ester intermediate in catalysis. Catalysis depends on charge relay system residues D211 and H239.

This sequence belongs to the AB hydrolase superfamily. Methylesterase family. In terms of assembly, homodimer.

It catalyses the reaction methyl (-)-jasmonate + H2O = jasmonate + methanol + H(+). The catalysed reaction is methyl salicylate + H2O = salicylate + methanol + H(+). The protein operates within plant hormone biosynthesis. It functions in the pathway lipid metabolism; oxylipin biosynthesis. Methylesterase that catalyzes the hydrolysis of methyl jasmonate (MeJA) into jasmonate (JA). Can also use methyl salicylate (MeSA) as substrate with a lower efficiency. The protein is Methyl jasmonate esterase 1 of Vitis vinifera (Grape).